A 506-amino-acid chain; its full sequence is Ribose import ATP-binding protein RbsA (506 aa).

ABC transporter domains follow at residues 5–241 and 254–498; these read LALT…VGRR and RDAA…TSDV. ATP is bound at residue 37–44; it reads GENGAGKS.

This sequence belongs to the ABC transporter superfamily. Ribose importer (TC 3.A.1.2.1) family. As to quaternary structure, the complex is composed of an ATP-binding protein (RbsA), two transmembrane proteins (RbsC) and a solute-binding protein (RbsB).

It localises to the cell inner membrane. The catalysed reaction is D-ribose(out) + ATP + H2O = D-ribose(in) + ADP + phosphate + H(+). Functionally, part of the ABC transporter complex RbsABC involved in ribose import. Responsible for energy coupling to the transport system. This chain is Ribose import ATP-binding protein RbsA, found in Burkholderia mallei (strain ATCC 23344).